A 581-amino-acid chain; its full sequence is Arginine--tRNA ligase (581 aa).

A 'HIGH' region motif is present at residues P122–H132.

It belongs to the class-I aminoacyl-tRNA synthetase family. In terms of assembly, monomer.

The protein resides in the cytoplasm. The catalysed reaction is tRNA(Arg) + L-arginine + ATP = L-arginyl-tRNA(Arg) + AMP + diphosphate. This chain is Arginine--tRNA ligase, found in Francisella tularensis subsp. tularensis (strain WY96-3418).